A 390-amino-acid polypeptide reads, in one-letter code: Carbamoyl phosphate synthase small chain (390 aa).

The interval 1-198 (MTSTPTPTPT…LGEGYAVGPE (198 aa)) is CPSase. Residues S53, G250, and G252 each contribute to the L-glutamine site. In terms of domain architecture, Glutamine amidotransferase type-1 spans 202–390 (RVVVLDYGVK…VGELKGRVEA (189 aa)). C279 functions as the Nucleophile in the catalytic mechanism. L280, Q283, N321, G323, and F324 together coordinate L-glutamine. Catalysis depends on residues H363 and E365.

This sequence belongs to the CarA family. As to quaternary structure, composed of two chains; the small (or glutamine) chain promotes the hydrolysis of glutamine to ammonia, which is used by the large (or ammonia) chain to synthesize carbamoyl phosphate. Tetramer of heterodimers (alpha,beta)4.

The enzyme catalyses hydrogencarbonate + L-glutamine + 2 ATP + H2O = carbamoyl phosphate + L-glutamate + 2 ADP + phosphate + 2 H(+). The catalysed reaction is L-glutamine + H2O = L-glutamate + NH4(+). Its pathway is amino-acid biosynthesis; L-arginine biosynthesis; carbamoyl phosphate from bicarbonate: step 1/1. The protein operates within pyrimidine metabolism; UMP biosynthesis via de novo pathway; (S)-dihydroorotate from bicarbonate: step 1/3. Its function is as follows. Small subunit of the glutamine-dependent carbamoyl phosphate synthetase (CPSase). CPSase catalyzes the formation of carbamoyl phosphate from the ammonia moiety of glutamine, carbonate, and phosphate donated by ATP, constituting the first step of 2 biosynthetic pathways, one leading to arginine and/or urea and the other to pyrimidine nucleotides. The small subunit (glutamine amidotransferase) binds and cleaves glutamine to supply the large subunit with the substrate ammonia. The chain is Carbamoyl phosphate synthase small chain from Maricaulis maris (strain MCS10) (Caulobacter maris).